Consider the following 597-residue polypeptide: Protein unc-93 homolog B1 (597 aa).

The interval 1–29 is disordered; it reads MEAEPPLYPMAGAAGPQGDEDLLGVPDGP. The next 5 membrane-spanning stretches (helical) occupy residues 64–84, 110–130, 132–152, 160–180, and 223–243; these read VLAA…LLQM, KMLM…PVLI, FFGT…FVST, TLVP…ASMG, and IFYS…IYFL. N-linked (GlcNAc...) asparagine glycans are attached at residues N251 and N272. The next 5 membrane-spanning stretches (helical) occupy residues 285–305, 343–363, 378–398, 403–423, and 428–448; these read LIVV…LVLG, LVPF…GIAL, LLVA…LGLW, VPLV…FFWA, and VLQH…GSAL. N449 is a glycosylation site (N-linked (GlcNAc...) asparagine). Transmembrane regions (helical) follow at residues 469–489 and 491–511; these read FIFT…YLGS and LHMK…AVSY. A disordered region spans residues 522-597; it reads VAPRQPRIPR…AQGGDGPEEQ (76 aa). Phosphoserine occurs at positions 547 and 550.

Belongs to the unc-93 family. As to quaternary structure, interacts with TLR3, TLR5, TLR7, and TLR9 (probably via transmembrane domain). Post-translationally, N-glycosylated. As to expression, expressed in plasmocytoid dendritic cells (at protein level). Highly expressed in antigen-presenting cells. Expressed in heart, and at lower level in kidney. Expressed at low level in other tissues.

It is found in the endoplasmic reticulum membrane. It localises to the endosome. The protein localises to the lysosome. Its subcellular location is the cytoplasmic vesicle. The protein resides in the phagosome. Plays an important role in innate and adaptive immunity by regulating nucleotide-sensing Toll-like receptor (TLR) signaling. Required for the transport of a subset of TLRs (including TLR3, TLR7 and TLR9) from the endoplasmic reticulum to endolysosomes where they can engage pathogen nucleotides and activate signaling cascades. May play a role in autoreactive B-cells removal. The protein is Protein unc-93 homolog B1 of Homo sapiens (Human).